Reading from the N-terminus, the 128-residue chain is Large-conductance mechanosensitive channel (128 aa).

The next 2 helical transmembrane spans lie at 10 to 30 and 76 to 96; these read FAMR…SAFG and GLFI…FMMI.

It belongs to the MscL family. In terms of assembly, homopentamer.

The protein resides in the cell inner membrane. Its function is as follows. Channel that opens in response to stretch forces in the membrane lipid bilayer. May participate in the regulation of osmotic pressure changes within the cell. In Haemophilus influenzae (strain PittEE), this protein is Large-conductance mechanosensitive channel.